The sequence spans 306 residues: Tryptophan 2,3-dioxygenase (306 aa).

The disordered stretch occupies residues 1–33; sequence MQPPGDDAAPRCPFAGAHAPDAPHVPEAAGDDA. Residues 75 to 79, tyrosine 137, and arginine 141 contribute to the substrate site; that span reads FIIQH. Histidine 264 lines the heme pocket. Residue threonine 278 participates in substrate binding.

It belongs to the tryptophan 2,3-dioxygenase family. Homotetramer. Heme serves as cofactor.

The catalysed reaction is L-tryptophan + O2 = N-formyl-L-kynurenine. It participates in amino-acid degradation; L-tryptophan degradation via kynurenine pathway; L-kynurenine from L-tryptophan: step 1/2. Its function is as follows. Heme-dependent dioxygenase that catalyzes the oxidative cleavage of the L-tryptophan (L-Trp) pyrrole ring and converts L-tryptophan to N-formyl-L-kynurenine. Catalyzes the oxidative cleavage of the indole moiety. In Burkholderia pseudomallei (strain 1106a), this protein is Tryptophan 2,3-dioxygenase.